Here is a 387-residue protein sequence, read N- to C-terminus: MRYLTAGESHGPGLTVIIEGAPAGLAIDISQINAELKKRQSGYGRGRRMQIESDQVEVRSGIRHGVTTGAPITFWIENKDHTHWKHVMQAEPIESDIEVKRRVSRPRPGHADLVGGMKYDHRDLRDVLERSSARETAARVAVGAFCKQLLQQVGVSLFSYVKVIGGERAESRTFDSLQEAQAVVDASPVRTLDEAAALRMMRRIDEAKANGDSIGGIVCTEVHGVVPGLGSYVQYDRKLDAKIAQAVMSVNAFKGVEFGEGFEMAYRPGSEVMDPIAYGDNGYTRLSNHLGGFEGGMTTGMPILCSAVMKPIPTLYKPLQSVDIDTKEAFLAQIERSDSCAVPAASLVVEAVIAFEIAKEMCETFGHDTMERIKHRVDEYREELRVW.

2 residues coordinate NADP(+): arginine 39 and arginine 45. FMN contacts are provided by residues 130–132 (RSS), 251–252 (NA), glycine 295, 310–314 (KPIPT), and arginine 336.

It belongs to the chorismate synthase family. Homotetramer. The cofactor is FMNH2.

It carries out the reaction 5-O-(1-carboxyvinyl)-3-phosphoshikimate = chorismate + phosphate. It participates in metabolic intermediate biosynthesis; chorismate biosynthesis; chorismate from D-erythrose 4-phosphate and phosphoenolpyruvate: step 7/7. Its function is as follows. Catalyzes the anti-1,4-elimination of the C-3 phosphate and the C-6 proR hydrogen from 5-enolpyruvylshikimate-3-phosphate (EPSP) to yield chorismate, which is the branch point compound that serves as the starting substrate for the three terminal pathways of aromatic amino acid biosynthesis. This reaction introduces a second double bond into the aromatic ring system. The sequence is that of Chorismate synthase from Exiguobacterium sp. (strain ATCC BAA-1283 / AT1b).